The sequence spans 167 residues: Inclusion membrane protein G (167 aa).

A run of 2 helical transmembrane segments spans residues 33-57 (VVLALSLFAVFASGSLSILSAAVLF) and 63-88 (VLPYLLILTTALLGCVYAVIVLLRSL). The tract at residues 94–167 (SCKKRSPEEI…DNSRSRSRSF (74 aa)) is sufficient for interaction with human 14-3-3 beta protein. The interval 97-167 (KRSPEEIEGA…DNSRSRSRSF (71 aa)) is disordered. Low complexity predominate over residues 122-135 (ESASPQASPTSSTL). Positions 161-166 (RSRSRS) match the Phosphorylation-dependent binding motif motif. S166 is modified (phosphoserine).

In infected HeLa cells colocalizes with host 14-3-3 protein (YWHAB); phosphorylation of Ser-166 is probably required. Interacts with Pkn1. Phosphorylated, possibly at more than one position, in infected HeLa cells. Phosphorylated by chlamydial kinase Pnk1.

The protein resides in the secreted. It is found in the host vacuole. Its subcellular location is the host pathogen-containing vacuole. The protein localises to the host pathogen-containing vacuole membrane. Its function is as follows. Inclusion membrane protein probably involved in early modification events of the chlamydial inclusion. The protein is Inclusion membrane protein G of Chlamydia trachomatis serovar L2 (strain ATCC VR-902B / DSM 19102 / 434/Bu).